Reading from the N-terminus, the 134-residue chain is Small ribosomal subunit protein uS8c (134 aa).

This sequence belongs to the universal ribosomal protein uS8 family. As to quaternary structure, part of the 30S ribosomal subunit.

The protein localises to the plastid. The protein resides in the chloroplast. One of the primary rRNA binding proteins, it binds directly to 16S rRNA central domain where it helps coordinate assembly of the platform of the 30S subunit. The polypeptide is Small ribosomal subunit protein uS8c (rps8) (Populus alba (White poplar)).